The following is a 220-amino-acid chain: Small ribosomal subunit protein uS2 (220 aa).

Belongs to the universal ribosomal protein uS2 family.

This chain is Small ribosomal subunit protein uS2, found in Methanococcus maripaludis (strain DSM 14266 / JCM 13030 / NBRC 101832 / S2 / LL).